The primary structure comprises 523 residues: Beta-glucosidase 31 (523 aa).

Residues 1 to 22 (MTPARVVFICCVVLLAAAAAAA) form the signal peptide. A beta-D-glucoside contacts are provided by residues Q49, H149, and 194-195 (NE). E195 functions as the Proton donor in the catalytic mechanism. A disulfide bridge connects residues C214 and C223. Residue N227 is glycosylated (N-linked (GlcNAc...) asparagine). A beta-D-glucoside contacts are provided by Y339 and E413. The active-site Nucleophile is the E413. Residue N450 is glycosylated (N-linked (GlcNAc...) asparagine). A beta-D-glucoside is bound by residues W460, 467–468 (EY), and F476.

It belongs to the glycosyl hydrolase 1 family.

The enzyme catalyses Hydrolysis of terminal, non-reducing beta-D-glucosyl residues with release of beta-D-glucose.. The sequence is that of Beta-glucosidase 31 (BGLU31) from Oryza sativa subsp. japonica (Rice).